Reading from the N-terminus, the 380-residue chain is Acyl-lipid (9+3)-(E)-desaturase (380 aa).

A disordered region spans residues 1 to 25; that stretch reads MGAGGCISVSETKPNQKNSLERAPY. Residues 9-18 are compositionally biased toward polar residues; the sequence is VSETKPNQKN. 2 helical membrane-spanning segments follow: residues 52–72 and 81–101; these read LSYVASDLTVAFLLYHATTYF and ALAWLAYWVAQGCVLTGVWVI. The short motif at 103–107 is the Histidine box-1 element; it reads HECGH. Residues 139 to 143 carry the Histidine box-2 motif; it reads HRRHH. 3 helical membrane passes run 177-197, 223-243, and 247-267; these read IGVLFITLTLGWPLYLTFNVS, IYLSDIGIVITSLVLLRAAMV, and VWLICVYGVPLMITNGFLVLV. The Histidine box-3 motif lies at 313-317; sequence HIVHH.

It belongs to the fatty acid desaturase type 1 family.

The protein resides in the membrane. The enzyme catalyses a (9Z)-octadecenoyl-containing glycerolipid + 2 Fe(II)-[cytochrome b5] + O2 + 2 H(+) = a (9Z,12E)-octadecadienoyl-containing glycerolipid + 2 Fe(III)-[cytochrome b5] + 2 H2O. It carries out the reaction a (9Z)-hexadecenoyl-containing glycerolipid + 2 Fe(II)-[cytochrome b5] + O2 + 2 H(+) = a (9Z,12E)-hexadecadienoyl-containing glycerolipid + 2 Fe(III)-[cytochrome b5] + 2 H2O. Functionally, involved in the biosynthesis of dimorphecolic acid (9-OH-18:2(10E,12E)). Converts oleic acid (18:1(9Z)) into 18:2(9Z,12E) and probably palmitoleic acid (16:1(9Z)) into 16:2(9Z,12E). Very limited ability to catalyze (Z)-delta(12) desaturation. The chain is Acyl-lipid (9+3)-(E)-desaturase from Dimorphotheca sinuata (African daisy).